Consider the following 282-residue polypeptide: Large ribosomal subunit protein uL2 (282 aa).

The interval R215–K282 is disordered. The span at R263 to K282 shows a compositional bias: basic residues.

It belongs to the universal ribosomal protein uL2 family. In terms of assembly, part of the 50S ribosomal subunit. Forms a bridge to the 30S subunit in the 70S ribosome.

Its function is as follows. One of the primary rRNA binding proteins. Required for association of the 30S and 50S subunits to form the 70S ribosome, for tRNA binding and peptide bond formation. It has been suggested to have peptidyltransferase activity; this is somewhat controversial. Makes several contacts with the 16S rRNA in the 70S ribosome. The polypeptide is Large ribosomal subunit protein uL2 (Mesomycoplasma hyopneumoniae (strain J / ATCC 25934 / NCTC 10110) (Mycoplasma hyopneumoniae)).